We begin with the raw amino-acid sequence, 401 residues long: Lipoyl synthase 1, mitochondrial (401 aa).

A mitochondrion-targeting transit peptide spans 1-25 (MWSSSSSLCRNPSFRRAWLSTVTVT). The segment at 49-79 (IDDFSSTNAPTTTTHYTSSNGSPIVRQKAAP) is disordered. Positions 51-70 (DFSSTNAPTTTTHYTSSNGS) are enriched in polar residues. Residues C117, C122, C128, C148, C152, C155, and S376 each coordinate [4Fe-4S] cluster. The 233-residue stretch at 133-365 (EDQTATATIM…QETAMGMGFA (233 aa)) folds into the Radical SAM core domain.

This sequence belongs to the radical SAM superfamily. Lipoyl synthase family. [4Fe-4S] cluster is required as a cofactor.

Its subcellular location is the mitochondrion. The enzyme catalyses [[Fe-S] cluster scaffold protein carrying a second [4Fe-4S](2+) cluster] + N(6)-octanoyl-L-lysyl-[protein] + 2 oxidized [2Fe-2S]-[ferredoxin] + 2 S-adenosyl-L-methionine + 4 H(+) = [[Fe-S] cluster scaffold protein] + N(6)-[(R)-dihydrolipoyl]-L-lysyl-[protein] + 4 Fe(3+) + 2 hydrogen sulfide + 2 5'-deoxyadenosine + 2 L-methionine + 2 reduced [2Fe-2S]-[ferredoxin]. Its pathway is protein modification; protein lipoylation via endogenous pathway; protein N(6)-(lipoyl)lysine from octanoyl-[acyl-carrier-protein]: step 2/2. Functionally, catalyzes the radical-mediated insertion of two sulfur atoms into the C-6 and C-8 positions of the octanoyl moiety bound to the lipoyl domains of lipoate-dependent enzymes, thereby converting the octanoylated domains into lipoylated derivatives. The protein is Lipoyl synthase 1, mitochondrial of Phaeodactylum tricornutum (strain CCAP 1055/1).